The sequence spans 203 residues: MFHNTFQSGLLSVLYSIGSKPLQIWDTQIKNGHVKRITDEEIQSLVLEIMGNNISTAFISCPVDPDKTLGIKLPFFVMVVKNMNKYFSFEVQIIDDKKIKRRFRASNYQSATRVKPFICTMPMRMDEGWNQIQFNLSDFVKRAYGTNYVETLRIQIHANCRIRRVYFADRLYTEDELPAEFKLYLPIRGQLSTQSPAFAMTSE.

It belongs to the CFAP20 family.

The protein resides in the nucleus. The protein localises to the cytoplasm. It localises to the cytoskeleton. Its subcellular location is the microtubule organizing center. It is found in the centrosome. The protein resides in the centriole. The protein localises to the cilium basal body. It localises to the cilium axoneme. In terms of biological role, cilium- and flagellum-specific protein that plays a role in axonemal structure organization and motility. Microtubule inner protein (MIP) part of the dynein-decorated doublet microtubules (DMTs) in cilia axoneme, which is required for motile cilia beating. Involved in the regulation of the size and morphology of cilia. Required for axonemal microtubules polyglutamylation. This chain is Cilia- and flagella-associated protein 20, found in Caenorhabditis elegans.